Here is a 573-residue protein sequence, read N- to C-terminus: Mucin-13 (573 aa).

The N-terminal stretch at 1–17 is a signal peptide; sequence MKGFLLLSLSLLLVTVG. Residues 16–234 show a composition bias toward low complexity; that stretch reads VGSSSQASST…VPSGGSTGPS (219 aa). Positions 16-237 are disordered; sequence VGSSSQASST…GGSTGPSDLC (222 aa). Over 18–480 the chain is Extracellular; it reads SSSQASSTTS…FGYSGMNCKD (463 aa). In terms of domain architecture, EGF-like 1 spans 233–273; it reads PSDLCNPNPCKGTASCVKLHSKHFCLCLEGYYYNSSLSSCV. 3 disulfides stabilise this stretch: Cys-237/Cys-248, Cys-242/Cys-257, and Cys-259/Cys-272. N-linked (GlcNAc...) asparagine glycosylation is found at Asn-266, Asn-316, and Asn-397. The SEA domain occupies 274-391; sequence KGTTFPGDIS…DYVSINLCDH (118 aa). EGF-like domains are found at residues 385-425 and 425-467; these read SINL…PFCV and VAVT…RKCE. Intrachain disulfides connect Cys-389–Cys-402, Cys-394–Cys-408, Cys-410–Cys-424, Cys-429–Cys-441, Cys-433–Cys-451, and Cys-453–Cys-466. The chain crosses the membrane as a helical span at residues 481–508; it reads QFQLILTIVGTIAGALILILLIAFIVSA. Residues 509 to 573 lie on the Cytoplasmic side of the membrane; that stretch reads RSKNKKKDGE…NQRSMPRPDY (65 aa). Residues 548-573 form a disordered region; that stretch reads PKVRTGVPSQTPNPYANQRSMPRPDY. Residues 554–567 are compositionally biased toward polar residues; the sequence is VPSQTPNPYANQRS.

Homodimer of beta subunits. Post-translationally, cleaved into two subunits, alpha and beta, probably between the first EGF domain and the SEA domain. Beta subunit contains the cytoplasmic tail and alpha subunit the extracellular tail. The homooligomerization into dimers is dependent on intrachain disulfide bonds. Highly N-glycosylated.

The protein resides in the cell membrane. It localises to the secreted. Epithelial and hemopoietic transmembrane mucin that may play a role in cell signaling. This is Mucin-13 (Muc13) from Mus musculus (Mouse).